Consider the following 308-residue polypeptide: Mitoferrin (308 aa).

A run of 6 helical transmembrane segments spans residues glycine 13–alanine 29, isoleucine 69–valine 89, isoleucine 111–methionine 131, tyrosine 168–alanine 184, leucine 213–valine 233, and methionine 285–phenylalanine 302. Solcar repeat units lie at residues glycine 14–lysine 100, histidine 108–isoleucine 192, and tyrosine 207–isoleucine 305.

Belongs to the mitochondrial carrier (TC 2.A.29) family.

It localises to the mitochondrion inner membrane. Its function is as follows. Mitochondrial solute carriers shuttle metabolites, nucleotides, and cofactors through the mitochondrial inner membrane. Mitochondrial iron transporter that mediates iron uptake. Probably required for heme synthesis of hemoproteins and Fe-S cluster assembly. The chain is Mitoferrin (mcfF) from Dictyostelium discoideum (Social amoeba).